A 412-amino-acid polypeptide reads, in one-letter code: UV DNA damage endonuclease (412 aa).

This sequence belongs to the uve1/UvsE family.

Functionally, component in a DNA repair pathway. Removal of UV LIGHT damaged nucleotides. Recognizes pyrimidine dimers and cleave a phosphodiester bond immediately 5' to the lesion. The sequence is that of UV DNA damage endonuclease from Clostridium perfringens (strain 13 / Type A).